The sequence spans 213 residues: Probable nicotinate-nucleotide adenylyltransferase (213 aa).

The protein belongs to the NadD family.

The enzyme catalyses nicotinate beta-D-ribonucleotide + ATP + H(+) = deamido-NAD(+) + diphosphate. Its pathway is cofactor biosynthesis; NAD(+) biosynthesis; deamido-NAD(+) from nicotinate D-ribonucleotide: step 1/1. Catalyzes the reversible adenylation of nicotinate mononucleotide (NaMN) to nicotinic acid adenine dinucleotide (NaAD). This is Probable nicotinate-nucleotide adenylyltransferase from Escherichia coli O17:K52:H18 (strain UMN026 / ExPEC).